The primary structure comprises 512 residues: Cytochrome P450 monooxygenase astB (512 aa).

Residues 5–25 (DLSFPAAIGAVFGAVAISVAA) traverse the membrane as a helical segment. Cys452 provides a ligand contact to heme.

The protein belongs to the cytochrome P450 family. Requires heme as cofactor.

It localises to the membrane. Its pathway is secondary metabolite biosynthesis; terpenoid biosynthesis. Its function is as follows. Cytochrome P450 monooxygenase; part of the gene cluster that mediates the biosynthesis of the sesquiterpenoid aspterric acid (AA), an inhibitor of dihydroxy-acid dehydratase (DHAD) effective as an herbicide. AstB catalyzes the second step within the pathway and converts (-)-daucane produced by the terpene cyclase astA into an alpha-epoxy carboxylate intermediate which is further converted into the tricyclic aspterric acid by the cytochrome P450 monooxygenase astC. This is Cytochrome P450 monooxygenase astB from Aspergillus terreus (strain NIH 2624 / FGSC A1156).